The chain runs to 144 residues: Nucleoside diphosphate kinase (144 aa).

Positions 11, 59, 87, 93, 104, and 114 each coordinate ATP. His117 (pros-phosphohistidine intermediate) is an active-site residue.

It belongs to the NDK family. As to quaternary structure, homotetramer. Mg(2+) serves as cofactor.

Its subcellular location is the cytoplasm. It catalyses the reaction a 2'-deoxyribonucleoside 5'-diphosphate + ATP = a 2'-deoxyribonucleoside 5'-triphosphate + ADP. The enzyme catalyses a ribonucleoside 5'-diphosphate + ATP = a ribonucleoside 5'-triphosphate + ADP. Major role in the synthesis of nucleoside triphosphates other than ATP. The ATP gamma phosphate is transferred to the NDP beta phosphate via a ping-pong mechanism, using a phosphorylated active-site intermediate. The protein is Nucleoside diphosphate kinase of Coxiella burnetii (strain CbuG_Q212) (Coxiella burnetii (strain Q212)).